A 124-amino-acid chain; its full sequence is uncharacterized protein (124 aa).

This is an uncharacterized protein from Bacillus subtilis (strain 168).